A 551-amino-acid chain; its full sequence is Colicin E3 (551 aa).

3 disordered regions span residues 1–74, 243–269, and 293–320; these read MSGG…SGGG, TLSP…NTRD, and PDQV…EAAE. The tract at residues 1–315 is translocation (T) domain; sequence MSGGDGRGHN…RQQEWDATHP (315 aa). Gly residues predominate over residues 20–35; sequence INGGPTGLGVGGGASD. Residues 35–39 carry the Binds to TolB motif; it reads DGSGW. Over residues 36 to 45 the composition is skewed to low complexity; the sequence is GSGWSSENNP. The span at 46–74 shows a compositional bias: gly residues; that stretch reads WGGGSGSGIHWGGGSGHGNGGGNGNSGGG. Residues 296-320 show a composition bias toward basic and acidic residues; the sequence is VKQRQDEENRRQQEWDATHPVEAAE. The stretch at 316–378 forms a coiled coil; the sequence is VEAAERNYER…IAEIKQFNRF (63 aa). The segment at 316-450 is receptor-binding (R) domain; the sequence is VEAAERNYER…SAENNLNDEK (135 aa). Positions 379–385 match the Hairpin motif; sequence AHDPMAG. Residues 386–450 adopt a coiled-coil conformation; the sequence is GHRMWQMAGL…SAENNLNDEK (65 aa). The segment at 406–505 is disordered; sequence NKQAAFDAAA…KRWTGDKGRK (100 aa). Residues 430–472 show a composition bias toward basic and acidic residues; that stretch reads ESRKKKEDKKRSAENNLNDEKNKPRKGFKDYGHDYHPAPKTEN. Positions 451–456 are linker; that stretch reads NKPRKG. A ribosome inactivating activity region spans residues 455–551; sequence KGFKDYGHDY…DPKRNIKKYL (97 aa). Residues 457–551 are cytotoxic RNase (C) domain; the sequence is FKDYGHDYHP…DPKRNIKKYL (95 aa). H513 serves as the catalytic Proton donor. Residue E517 is the Proton acceptor of the active site. A disordered region spans residues 517-551; that stretch reads EGYRASDGQHLGSFDPKTGNQLKGPDPKRNIKKYL. The interval 530–551 is binding of immunity protein; the sequence is FDPKTGNQLKGPDPKRNIKKYL. R545 is an active-site residue.

The protein belongs to the cloacin colicin family. As to quaternary structure, native colicin E3 is a 1:1 complex of A chain and protein B (cognate immunity protein, Im3); protein A is 1,000-fold more active in inactivating ribosomes than the native complex. The cytotoxic fragment (residues 456-551, C95) forms a 1:1 complex with Im3. The receptor-binding (R) domain binds obliquely to its receptor BtuB without displacing BtuB's central plug; binding unfolds the R domain. The N-terminal 83 residues (T83) bind OmpF; trimeric complexes with colicin E3, BtuB and OmpF can be cross-linked and immunoprecipitated. Probably inserts into the OmpF pore as an unfolded peptide and spans the OmpF pore. In a complex with T.thermophilus 70S ribosomes, cytotoxic fragment C96 contacts 16S rRNA, 23S rRNA, mRNA, P-site tRNA and ribosomal protein uS12.

The protein resides in the secreted. Functionally, colicins are polypeptide toxins produced by and active against E.coli and closely related bacteria. Cleaves 16S rRNA between adenosine-1492 and guanosine-1493 (E.coli 16S rRNA numbering), releasing a 49 nucleotide (nt) 'colicin' fragment. Inactivates 70S ribosomes or 30S subunits by endonucleolytically cleaving 16S RNA at a specific site about 50 nt from its C-terminus. Produces 5'-OH-guanosine and a 2',3'-cyclic phosphate adenosine. Mixing a susceptible (e.g. strain K12 / A19) and colicin E3 producing strain results in total protein translation inhibition within 11 minutes. Its activity is inhibited by cognate immunity protein Im3. In terms of biological role, uses BtuB, the vitamin B transporter, as a receptor on the outer membrane; binds via the receptor (R) domain. Then the translocation domain (T) probably 'fishes' for its outer membrane translocon protein, OmpF. The N-terminal 83 residues (T83) can bind to and occlude OmpF channels. A complex of the cytotoxic C-terminal 96 residues (C96) plus the immunity protein does not occlude OmpF; upon complex separation from the immunity protein C96 becomes disordered and is able to bind OmpF. The N-terminus probably binds TolB and then reinserts into an empty pore of trimeric OmpF; the rest of the protein is pulled through OmpF and crosses the inner membrane, where the cytotoxic fragment is probably released by protease FtsH. The protein is Colicin E3 (ceaC) of Escherichia coli.